A 561-amino-acid chain; its full sequence is Urocanate hydratase (561 aa).

NAD(+) contacts are provided by residues 52–53 (GG), glutamine 130, 176–178 (GMG), glutamate 196, arginine 201, 242–243 (NA), 263–267 (QTSAH), 273–274 (YL), and tyrosine 322. The active site involves cysteine 410. NAD(+) is bound at residue glycine 492.

The protein belongs to the urocanase family. NAD(+) is required as a cofactor.

It localises to the cytoplasm. It catalyses the reaction 4-imidazolone-5-propanoate = trans-urocanate + H2O. It functions in the pathway amino-acid degradation; L-histidine degradation into L-glutamate; N-formimidoyl-L-glutamate from L-histidine: step 2/3. Functionally, catalyzes the conversion of urocanate to 4-imidazolone-5-propionate. The polypeptide is Urocanate hydratase (Salmonella typhi).